The following is a 210-amino-acid chain: MTGLFITLEGPEGAGKSTNRDYLAERLRSEGIEVVLTREPGGTPLAERIREVLLAPGEEQMNPDTELLLVFAARAQHLAEVIRPALARGAVVICDRFTDSTYAYQGGGRGLSLARIATLETFVQGDLRPDLTLVFDLPVEVGLARASARGRLDRFELEGQAFFDAVRTAFLTRAAAEPERYYLLDAAQPLAHVQQAIDALLPTLLERARG.

10–17 (GPEGAGKS) provides a ligand contact to ATP.

This sequence belongs to the thymidylate kinase family.

The enzyme catalyses dTMP + ATP = dTDP + ADP. Phosphorylation of dTMP to form dTDP in both de novo and salvage pathways of dTTP synthesis. This is Thymidylate kinase from Pseudomonas fluorescens (strain SBW25).